The primary structure comprises 406 residues: Cysteine desulfurase (406 aa).

At Lys-226 the chain carries N6-(pyridoxal phosphate)lysine. The Cysteine persulfide intermediate role is filled by Cys-364.

Belongs to the class-V pyridoxal-phosphate-dependent aminotransferase family. Csd subfamily. In terms of assembly, homodimer. Interacts with SufE and the SufBCD complex composed of SufB, SufC and SufD. The interaction with SufE is required to mediate the direct transfer of the sulfur atom from the S-sulfanylcysteine. Pyridoxal 5'-phosphate is required as a cofactor.

It localises to the cytoplasm. It carries out the reaction (sulfur carrier)-H + L-cysteine = (sulfur carrier)-SH + L-alanine. The catalysed reaction is L-selenocysteine + AH2 = hydrogenselenide + L-alanine + A + H(+). The protein operates within cofactor biosynthesis; iron-sulfur cluster biosynthesis. Its function is as follows. Cysteine desulfurases mobilize the sulfur from L-cysteine to yield L-alanine, an essential step in sulfur metabolism for biosynthesis of a variety of sulfur-containing biomolecules. Component of the suf operon, which is activated and required under specific conditions such as oxidative stress and iron limitation. Acts as a potent selenocysteine lyase in vitro, that mobilizes selenium from L-selenocysteine. Selenocysteine lyase activity is however unsure in vivo. The polypeptide is Cysteine desulfurase (Cronobacter sakazakii (strain ATCC BAA-894) (Enterobacter sakazakii)).